The sequence spans 377 residues: MKNNIITLTQSLIQRPSISPDDQGCQQLIAERLQAVGFKLEWLPFGDTLNLWATHGEGKCIAFAGHTDVVPIGNESQWTYPPFEARIVENMLYGRGAADMKGALAAMVIAAETFVKHLPNHQGKIALLITSDEEAAATNGTVKVVETLIKRNEKIDYCVVGEPSSATQFGDIIKNGRRGSITGNLYIQGVQGHVAYPHLADNPVHNALKFLDELTHYQWDKGNEFFPPTSLQIANIHAGTGSNNVIPGELYVQFNLRYCTEVTDEIIKTKVAEMLEKHKLTYRIDWNLSGKPFLTPQGKLVNATIEAVKKFTQIRPHLDTGGGTSDARFIATMGAEVVEFGPLNQTIHKVNECVNIDDLAKCGEIYYYILEKLFNEQ.

H66 is a Zn(2+) binding site. The active site involves D68. Residue D99 participates in Zn(2+) binding. The Proton acceptor role is filled by E133. Residues E134, E162, and H348 each contribute to the Zn(2+) site.

It belongs to the peptidase M20A family. DapE subfamily. As to quaternary structure, homodimer. Requires Zn(2+) as cofactor. It depends on Co(2+) as a cofactor.

The catalysed reaction is N-succinyl-(2S,6S)-2,6-diaminopimelate + H2O = (2S,6S)-2,6-diaminopimelate + succinate. The protein operates within amino-acid biosynthesis; L-lysine biosynthesis via DAP pathway; LL-2,6-diaminopimelate from (S)-tetrahydrodipicolinate (succinylase route): step 3/3. Catalyzes the hydrolysis of N-succinyl-L,L-diaminopimelic acid (SDAP), forming succinate and LL-2,6-diaminopimelate (DAP), an intermediate involved in the bacterial biosynthesis of lysine and meso-diaminopimelic acid, an essential component of bacterial cell walls. The protein is Succinyl-diaminopimelate desuccinylase of Histophilus somni (strain 2336) (Haemophilus somnus).